The chain runs to 192 residues: Probable nicotinate-nucleotide adenylyltransferase (192 aa).

Belongs to the NadD family.

The catalysed reaction is nicotinate beta-D-ribonucleotide + ATP + H(+) = deamido-NAD(+) + diphosphate. Its pathway is cofactor biosynthesis; NAD(+) biosynthesis; deamido-NAD(+) from nicotinate D-ribonucleotide: step 1/1. Catalyzes the reversible adenylation of nicotinate mononucleotide (NaMN) to nicotinic acid adenine dinucleotide (NaAD). The sequence is that of Probable nicotinate-nucleotide adenylyltransferase from Rhizobium etli (strain CIAT 652).